The following is a 369-amino-acid chain: 4-hydroxy-3-methylbut-2-en-1-yl diphosphate synthase (flavodoxin) (369 aa).

The [4Fe-4S] cluster site is built by C270, C273, C305, and E312.

The protein belongs to the IspG family. It depends on [4Fe-4S] cluster as a cofactor.

The catalysed reaction is (2E)-4-hydroxy-3-methylbut-2-enyl diphosphate + oxidized [flavodoxin] + H2O + 2 H(+) = 2-C-methyl-D-erythritol 2,4-cyclic diphosphate + reduced [flavodoxin]. The protein operates within isoprenoid biosynthesis; isopentenyl diphosphate biosynthesis via DXP pathway; isopentenyl diphosphate from 1-deoxy-D-xylulose 5-phosphate: step 5/6. Functionally, converts 2C-methyl-D-erythritol 2,4-cyclodiphosphate (ME-2,4cPP) into 1-hydroxy-2-methyl-2-(E)-butenyl 4-diphosphate. This Pseudomonas putida (strain ATCC 700007 / DSM 6899 / JCM 31910 / BCRC 17059 / LMG 24140 / F1) protein is 4-hydroxy-3-methylbut-2-en-1-yl diphosphate synthase (flavodoxin).